Consider the following 244-residue polypeptide: HTH-type transcriptional regulator RdgA (244 aa).

In terms of domain architecture, HTH cro/C1-type spans 9–62; it reads LKTARTAQGLSQKALGDMIGVSQAAIQKIEVGKASQTTKIVELSNNLRVRPEWL. Positions 20–39 form a DNA-binding region, H-T-H motif; the sequence is QKALGDMIGVSQAAIQKIEV.

Its function is as follows. Regulates pectin lyase production in response to DNA damage. The polypeptide is HTH-type transcriptional regulator RdgA (rdgA) (Pectobacterium carotovorum subsp. carotovorum (Erwinia carotovora subsp. carotovora)).